The following is a 306-amino-acid chain: Porphobilinogen deaminase (306 aa).

Residue Cys-239 is modified to S-(dipyrrolylmethanemethyl)cysteine.

Belongs to the HMBS family. In terms of assembly, monomer. Dipyrromethane serves as cofactor.

The catalysed reaction is 4 porphobilinogen + H2O = hydroxymethylbilane + 4 NH4(+). Its pathway is porphyrin-containing compound metabolism; protoporphyrin-IX biosynthesis; coproporphyrinogen-III from 5-aminolevulinate: step 2/4. Its function is as follows. Tetrapolymerization of the monopyrrole PBG into the hydroxymethylbilane pre-uroporphyrinogen in several discrete steps. The sequence is that of Porphobilinogen deaminase (hemC) from Helicobacter pylori (strain ATCC 700392 / 26695) (Campylobacter pylori).